The chain runs to 363 residues: Putative replication factor C small subunit L510 (363 aa).

47-54 (GPPGTGKT) contacts ATP.

It belongs to the activator 1 small subunits family. RfcS subfamily.

Functionally, part of the RFC clamp loader complex which loads the PCNA sliding clamp onto DNA. The protein is Putative replication factor C small subunit L510 of Acanthamoeba polyphaga mimivirus (APMV).